Here is a 956-residue protein sequence, read N- to C-terminus: MMSSLFVEGMLLKSADESCLPAKGKQRRTGDLRRLNHHRQPAFVRWICRRKLSGVSRIEFHSGGLTPPRAVLNPVSPPVTTTKKRVFTFGKGRSEGNKDMKSLLGGKGANLAEMASIGLSVPPGLTISTEACEEYQQNGKKLPPGLWDEILEGLRYVQKEMSASLGDPSKPLLLSVRSGAAISMPGMMDTVLNLGLNDEVVAGLAGKSGARFAYDSYRRFLDMFGNVVMGIPHSLFDEKLEEMKAEKGVHLDTDLTAADLKDLVEQYKNVYVEAKGEKFPTDPKKQLELAVNAVFDSWDSPRANKYRSINQITGLKGTAVNIQCMVFGNMGNTSGTGVLFTRNPSTGEKKLYGEFLVNAQGEDVVAGIRTPEDLATMETCMPEAYRELVENCKILERHYKDMMDIEFTVQENRLWMLQCRTGKRTGKGAVRIAVDMVNEGLIDTRTAIKRVETQHLDQLLHPQFENPSAYKSHVVATGLPASPGAAVGQVVFSAEDAETWHAQGKSAILVRTETSPEDVGGMHAAAGILTARGGMTSHAAVVARGWGKCCVSGCADIRVNDDMKVLTIGDRVIKEGDWLSLNGSTGEVILGKQLLAPPAMSNDLETFMSWADQVRRLKVMANADTPNDALTARNNGAQGIGLCRTEHMFFASDERIKAVRKMIMAVTPEQRKAALDLLLPYQRSDFEGIFRAMDGLPVTIRLLDPPLHEFLPEGDLEHIVNELAVDTGMSEDEIYSKIEKLSEVNPMLGFRGCRLGISYPELTEMQVRAIFQAAVSMNNQGVTVIPEIMVPLVGTPQELRHQIGVIRGVAANVFAEMGLTMDYKVGTMIEIPRAALIAEEIAKEAEFFSFGTNDLTQMTFGYSRDDVGKFLQIYLSQGILQHDPFEVLDQKGVGQLIKMATEKGRAANPNLKVGICGEHGGEPSSVAFFDGVGLDYVSCSPFRVPIARLAAAQVVV.

The N-terminal 79 residues, 1 to 79, are a transit peptide targeting the chloroplast; that stretch reads MMSSLFVEGM…AVLNPVSPPV (79 aa). Phosphothreonine; by PDRP1 is present on T536. The Tele-phosphohistidine intermediate role is filled by H538. Residues R644, R701, E830, G851, T852, N853, and D854 each coordinate substrate. Position 830 (E830) interacts with Mg(2+). Position 854 (D854) interacts with Mg(2+). C916 serves as the catalytic Proton donor.

It belongs to the PEP-utilizing enzyme family. Homotetramer. Mg(2+) serves as cofactor. Post-translationally, phosphorylation of Thr-536 in the dark inactivates the enzyme. Dephosphorylation upon light stimulation reactivates the enzyme.

It localises to the plastid. It is found in the chloroplast. It carries out the reaction pyruvate + phosphate + ATP = phosphoenolpyruvate + AMP + diphosphate + H(+). Activated by light-induced dephosphorylation. Inhibited by dark-induced phosphorylation. Both reactions are catalyzed by PDRP1. Formation of phosphoenolpyruvate. The protein is Pyruvate, phosphate dikinase, chloroplastic (PPDK) of Flaveria pringlei.